A 197-amino-acid chain; its full sequence is dTTP/UTP pyrophosphatase (197 aa).

The active-site Proton acceptor is aspartate 69.

The protein belongs to the Maf family. YhdE subfamily. It depends on a divalent metal cation as a cofactor.

The protein localises to the cytoplasm. The catalysed reaction is dTTP + H2O = dTMP + diphosphate + H(+). It carries out the reaction UTP + H2O = UMP + diphosphate + H(+). Its function is as follows. Nucleoside triphosphate pyrophosphatase that hydrolyzes dTTP and UTP. May have a dual role in cell division arrest and in preventing the incorporation of modified nucleotides into cellular nucleic acids. This Lachnoclostridium phytofermentans (strain ATCC 700394 / DSM 18823 / ISDg) (Clostridium phytofermentans) protein is dTTP/UTP pyrophosphatase.